The following is a 165-amino-acid chain: Coronafacic acid dehydratase (165 aa).

His-62 is an active-site residue.

This sequence belongs to the thioester dehydratase family.

The protein operates within phytotoxin biosynthesis; coronatine biosynthesis. The polypeptide is Coronafacic acid dehydratase (cfa2) (Pseudomonas savastanoi pv. glycinea (Pseudomonas syringae pv. glycinea)).